The sequence spans 464 residues: Cerebellar degeneration-related protein 2-like (464 aa).

Coiled-coil stretches lie at residues 31 to 154 (AAEL…RRKT), 201 to 264 (VSSL…KSRV), and 342 to 379 (MSILREVDEQYHALLEKYEELLGKCRRHEESLRHAEVQ). Residues 371-419 (ESLRHAEVQTSRPVSRDPSMKECRVAEPQQPPPTPPQTPSTPEALEGIS) are disordered. Residues 384 to 395 (VSRDPSMKECRV) show a composition bias toward basic and acidic residues. A compositionally biased stretch (pro residues) spans 399–409 (QQPPPTPPQTP).

This sequence belongs to the CDR2 family.

The polypeptide is Cerebellar degeneration-related protein 2-like (cdr2l) (Danio rerio (Zebrafish)).